The chain runs to 128 residues: Sulfurtransferase TusD (128 aa).

Residue Cys-78 is the Cysteine persulfide intermediate of the active site.

The protein belongs to the DsrE/TusD family. Heterohexamer, formed by a dimer of trimers. The hexameric TusBCD complex contains 2 copies each of TusB, TusC and TusD. The TusBCD complex interacts with TusE.

It is found in the cytoplasm. In terms of biological role, part of a sulfur-relay system required for 2-thiolation of 5-methylaminomethyl-2-thiouridine (mnm(5)s(2)U) at tRNA wobble positions. Accepts sulfur from TusA and transfers it in turn to TusE. The protein is Sulfurtransferase TusD of Salmonella typhi.